Reading from the N-terminus, the 190-residue chain is CASP-like protein 1E1 (190 aa).

The segment at M1–S23 is disordered. Residues M1–E28 lie on the Cytoplasmic side of the membrane. A helical transmembrane segment spans residues L29–A49. Topologically, residues K50–N83 are extracellular. N-linked (GlcNAc...) asparagine glycosylation occurs at N67. The chain crosses the membrane as a helical span at residues I84–S104. The Cytoplasmic portion of the chain corresponds to K105 to S111. A helical transmembrane segment spans residues L112–G132. The Extracellular segment spans residues A133–Q163. Residues A164 to L184 form a helical membrane-spanning segment. Over D185–P190 the chain is Cytoplasmic.

It belongs to the Casparian strip membrane proteins (CASP) family. In terms of assembly, homodimer and heterodimers.

The protein resides in the cell membrane. The protein is CASP-like protein 1E1 of Arabidopsis thaliana (Mouse-ear cress).